The following is an 887-amino-acid chain: Alanine--tRNA ligase (887 aa).

4 residues coordinate Zn(2+): His-564, His-568, Cys-676, and His-680.

The protein belongs to the class-II aminoacyl-tRNA synthetase family. Zn(2+) is required as a cofactor.

It is found in the cytoplasm. The catalysed reaction is tRNA(Ala) + L-alanine + ATP = L-alanyl-tRNA(Ala) + AMP + diphosphate. Catalyzes the attachment of alanine to tRNA(Ala) in a two-step reaction: alanine is first activated by ATP to form Ala-AMP and then transferred to the acceptor end of tRNA(Ala). Also edits incorrectly charged Ser-tRNA(Ala) and Gly-tRNA(Ala) via its editing domain. This is Alanine--tRNA ligase from Chelativorans sp. (strain BNC1).